The sequence spans 173 residues: Calcium-binding protein 5 (173 aa).

EF-hand domains follow at residues 28–63 (DELDELREAFLEFDKDQDGFISYKDLGNLMRTMGYM), 82–99 (GRVDFEDFVELMTPKLLA), 105–140 (IGVQEMRDAFKEFDANGDGEITLAELQQAMQRLLGE), and 142–173 (LTPREIAEVVQEADINGDGTVDFEEFVKMMSR). Ca(2+)-binding residues include aspartate 41, aspartate 43, aspartate 45, and aspartate 52. Aspartate 118, asparagine 120, aspartate 122, glutamate 124, glutamate 129, aspartate 155, asparagine 157, aspartate 159, threonine 161, and glutamate 166 together coordinate Ca(2+).

In terms of assembly, interacts with CACNA1C (via C-terminal CDB motif) in a calcium-dependent manner. Interacts with STXBP1. Interacts with MYO6. As to expression, expressed in inner and outer plexiform layers of the retina, and retinal bipolar cells (at protein level). Expressed in the inner hair cells (IHC) of the cochlea.

The protein localises to the cytoplasm. Functionally, inhibits calcium-dependent inactivation of L-type calcium channel and shifts voltage dependence of activation to more depolarized membrane potentials. Involved in the transmission of light signals. May positively regulate neurotransmitter vesicle endocytosis and exocytosis in a salt-dependent manner. May play a role in the extension and network organization of neurites. The polypeptide is Calcium-binding protein 5 (Cabp5) (Mus musculus (Mouse)).